Consider the following 515-residue polypeptide: Slowpoke-binding protein (515 aa).

Residues 1–31 are disordered; the sequence is MFKFNKAAQQQRIDNRNSAVTGHDPFVRPPV. Over residues 7 to 20 the composition is skewed to polar residues; sequence AAQQQRIDNRNSAV. 2 positions are modified to phosphoserine: Ser54 and Ser79. The span at 73–82 shows a compositional bias: polar residues; sequence SSNRSASSEQ. Residues 73–94 form a disordered region; it reads SSNRSASSEQDNSDLSEHSEKS. Residues 191 to 203 form an interaction with Slo region; the sequence is NWFLVTDASVRTD. The segment at 483–503 is disordered; it reads SLSEANSPCTPPSTPHDRRTG.

Interacts specifically with Slo; which activates Slo activity. Interacts with 14-3-3-zeta when phosphorylated. Forms a heterotetrameric complex containing phosphorylated Slob, Slo and 14-3-3-zeta, which represses Slo activity due to the indirect interaction between Slo and 14-3-3-zeta. In terms of processing, phosphorylated. Phosphorylation of Ser-54 and Ser-79 is required for the interaction with 14-3-3-zeta but not with that of Slo. As to expression, expressed in head. In larval brain, it is expressed in the mushroom body. Also expressed in larval muscles.

It is found in the cytoplasm. In terms of biological role, regulator of calcium-activated channel Slo. Increases or decreases the voltage sensitivity of Slo, depending on the absence or presence of 14-3-3-zeta in the complex, respectively. The sequence is that of Slowpoke-binding protein (Slob) from Drosophila melanogaster (Fruit fly).